The following is a 423-amino-acid chain: NADP-specific glutamate dehydrogenase (423 aa).

The active site involves Lys-112.

It belongs to the Glu/Leu/Phe/Val dehydrogenases family. Homohexamer.

The enzyme catalyses L-glutamate + NADP(+) + H2O = 2-oxoglutarate + NH4(+) + NADPH + H(+). The chain is NADP-specific glutamate dehydrogenase (gdhA) from Saccharolobus shibatae (strain ATCC 51178 / DSM 5389 / JCM 8931 / NBRC 15437 / B12) (Sulfolobus shibatae).